The primary structure comprises 268 residues: Indole-3-glycerol phosphate synthase (268 aa).

This sequence belongs to the TrpC family.

The catalysed reaction is 1-(2-carboxyphenylamino)-1-deoxy-D-ribulose 5-phosphate + H(+) = (1S,2R)-1-C-(indol-3-yl)glycerol 3-phosphate + CO2 + H2O. The protein operates within amino-acid biosynthesis; L-tryptophan biosynthesis; L-tryptophan from chorismate: step 4/5. This chain is Indole-3-glycerol phosphate synthase, found in Micrococcus luteus (strain ATCC 4698 / DSM 20030 / JCM 1464 / CCM 169 / CCUG 5858 / IAM 1056 / NBRC 3333 / NCIMB 9278 / NCTC 2665 / VKM Ac-2230) (Micrococcus lysodeikticus).